Here is a 648-residue protein sequence, read N- to C-terminus: Macrolide export ATP-binding/permease protein MacB (648 aa).

An ABC transporter domain is found at 5–243; that stretch reads LELKDIRRSY…AGGTEPVVNT (239 aa). ATP is bound at residue 41–48; it reads GASGSGKS. The next 4 helical transmembrane spans lie at 273–293, 523–543, 576–596, and 600–620; these read LLTM…VVVG, LFLT…VMNI, AVLV…LIAF, and LFLP…AFLC.

The protein belongs to the ABC transporter superfamily. Macrolide exporter (TC 3.A.1.122) family. In terms of assembly, homodimer. Part of the tripartite efflux system MacAB-TolC, which is composed of an inner membrane transporter, MacB, a periplasmic membrane fusion protein, MacA, and an outer membrane component, TolC. The complex forms a large protein conduit and can translocate molecules across both the inner and outer membranes. Interacts with MacA.

Its subcellular location is the cell inner membrane. Its function is as follows. Part of the tripartite efflux system MacAB-TolC. MacB is a non-canonical ABC transporter that contains transmembrane domains (TMD), which form a pore in the inner membrane, and an ATP-binding domain (NBD), which is responsible for energy generation. Confers resistance against macrolides. This is Macrolide export ATP-binding/permease protein MacB from Shigella flexneri.